A 376-amino-acid chain; its full sequence is Partitioning defective 6 homolog gamma (376 aa).

Residues 18 to 98 form the PB1 domain; the sequence is AVEVKSKFGA…PLLRVFIQKR (81 aa). Residues 127–254 form an interaction with PARD3 and CDC42 region; that stretch reads RRRAHLDIGL…VTVKPANQRN (128 aa). Residues 134–151 form the Pseudo-CRIB domain; that stretch reads IGLPRDFRPVSSIIDVDL. The PDZ domain occupies 158–251; it reads RVRLHRHGCE…NLIVTVKPAN (94 aa). The interval 356–376 is disordered; it reads PRHSLALPPGGVEEHGPAVTL. Basic and acidic residues predominate over residues 367 to 376; that stretch reads VEEHGPAVTL.

Belongs to the PAR6 family. In terms of assembly, interacts with PARD3. Interacts with GTP-bound forms of CDC42, RHOQ/TC10 and RAC1. Interacts with the N-terminal part of PRKCI and PRKCZ. As to expression, widely expressed, with a higher expression in fetal and adult kidney.

The protein localises to the cytoplasm. Its subcellular location is the cell membrane. The protein resides in the cell junction. It localises to the tight junction. Adapter protein involved in asymmetrical cell division and cell polarization processes. May play a role in the formation of epithelial tight junctions. The PARD6-PARD3 complex links GTP-bound Rho small GTPases to atypical protein kinase C proteins. The chain is Partitioning defective 6 homolog gamma (PARD6G) from Homo sapiens (Human).